Reading from the N-terminus, the 119-residue chain is V-type proton ATPase subunit F (119 aa).

Belongs to the V-ATPase F subunit family. V-ATPase is a heteromultimeric enzyme made up of two complexes: the ATP-hydrolytic V1 complex and the proton translocation V0 complex. The V1 complex consists of three catalytic AB heterodimers that form a heterohexamer, three peripheral stalks each consisting of EG heterodimers, one central rotor including subunits D and F, and the regulatory subunits C and H. The proton translocation complex V0 consists of the proton transport subunit a, a ring of proteolipid subunits c9c'', rotary subunit d, subunits e and f, and the accessory subunits ATP6AP1/Ac45 and ATP6AP2/PRR.

The protein resides in the cytoplasmic vesicle. It is found in the secretory vesicle. The protein localises to the synaptic vesicle membrane. Its subcellular location is the clathrin-coated vesicle membrane. Functionally, subunit of the V1 complex of vacuolar(H+)-ATPase (V-ATPase), a multisubunit enzyme composed of a peripheral complex (V1) that hydrolyzes ATP and a membrane integral complex (V0) that translocates protons. V-ATPase is responsible for acidifying and maintaining the pH of intracellular compartments and in some cell types, is targeted to the plasma membrane, where it is responsible for acidifying the extracellular environment. The chain is V-type proton ATPase subunit F (Atp6v1f) from Mus musculus (Mouse).